The primary structure comprises 122 residues: Large ribosomal subunit protein uL22 (122 aa).

Positions Val102–Lys122 are disordered.

This sequence belongs to the universal ribosomal protein uL22 family. In terms of assembly, part of the 50S ribosomal subunit.

Its function is as follows. This protein binds specifically to 23S rRNA; its binding is stimulated by other ribosomal proteins, e.g. L4, L17, and L20. It is important during the early stages of 50S assembly. It makes multiple contacts with different domains of the 23S rRNA in the assembled 50S subunit and ribosome. In terms of biological role, the globular domain of the protein is located near the polypeptide exit tunnel on the outside of the subunit, while an extended beta-hairpin is found that lines the wall of the exit tunnel in the center of the 70S ribosome. This Helicobacter pylori (strain ATCC 700392 / 26695) (Campylobacter pylori) protein is Large ribosomal subunit protein uL22.